The sequence spans 488 residues: UDP-GalNAc:beta-1,3-N-acetylgalactosaminyltransferase 2 (488 aa).

The Cytoplasmic portion of the chain corresponds to 1 to 2 (MR). Residues 3–23 (HLLLLFLCPCAIGVAFHLWLF) traverse the membrane as a helical; Signal-anchor for type II membrane protein segment. N-linked (GlcNAc...) asparagine glycosylation is found at asparagine 24, asparagine 105, and asparagine 162. The Lumenal segment spans residues 24 to 488 (NFSGLFTWFP…CGNPCACEDR (465 aa)).

This sequence belongs to the glycosyltransferase 31 family.

The protein localises to the golgi apparatus membrane. The protein resides in the endoplasmic reticulum. The catalysed reaction is 3-O-(N-acetyl-beta-D-glucosaminyl-(1-&gt;4)-alpha-D-mannosyl)-L-threonyl-[protein] + UDP-N-acetyl-alpha-D-galactosamine = 3-O-[beta-D-GalNAc-(1-&gt;3)-beta-D-GlcNAc-(1-&gt;4)-alpha-D-Man]-L-Thr-[protein] + UDP + H(+). Its pathway is protein modification; protein glycosylation. Functionally, beta-1,3-N-acetylgalactosaminyltransferase that synthesizes a unique carbohydrate structure, GalNAc-beta-1-3GlcNAc, on N- and O-glycans. Has no galactose nor galactosaminyl transferase activity toward any acceptor substrate. Involved in alpha-dystroglycan (dag1) glycosylation. The chain is UDP-GalNAc:beta-1,3-N-acetylgalactosaminyltransferase 2 (b3galnt2) from Xenopus tropicalis (Western clawed frog).